Reading from the N-terminus, the 361-residue chain is MNASVLGLCLSGPLVLLLAWLAPPVTSSWWYMRAAGSSRVMCDNVPGLVSRQRQLCHRHPEVMRSIGLGIAEWTAECQHQFRQHRWNCNTLDRDHSLFGRVLLRSSREAAFVYAISSAGVVFAITRACSQGELKSCSCDPKKKGSAKDSKGTFDWGGCSDNIDYGIKFARAFVDAKERKGKDARALMNLHNNRAGRKAVKRFLKQECKCHGVSGSCTLRTCWLAMADFRKTGDYLWRKYNGAIQVVMNQDGTGFTVANKRFKKPTKNDLVYFENSPDYCIKDRDAGSLGTAGRVCNLTSRGMDSCEVMCCGRGYDTARVTRMTKCECKFHWCCAVRCQDCLEALDVHTCKAPSSASEGAPT.

An N-terminal signal peptide occupies residues Met1 to Ser27. 11 disulfides stabilise this stretch: Cys77-Cys88, Cys128-Cys136, Cys138-Cys158, Cys207-Cys221, Cys209-Cys216, Cys279-Cys310, Cys295-Cys305, Cys309-Cys349, Cys325-Cys340, Cys327-Cys337, and Cys332-Cys333. Residue Ser213 is the site of O-palmitoleoyl serine; by PORCN attachment. Asn296 is a glycosylation site (N-linked (GlcNAc...) asparagine).

This sequence belongs to the Wnt family. Palmitoleoylation is required for efficient binding to frizzled receptors. Depalmitoleoylation leads to Wnt signaling pathway inhibition.

The protein resides in the secreted. Its subcellular location is the extracellular space. The protein localises to the extracellular matrix. Its function is as follows. Ligand for members of the frizzled family of seven transmembrane receptors. Probable developmental protein. May be a signaling molecule which affects the development of discrete regions of tissues. Is likely to signal over only few cell diameters. In Ornithorhynchus anatinus (Duckbill platypus), this protein is Protein Wnt-2 (WNT2).